The following is a 160-amino-acid chain: Cytochrome c-type biogenesis protein CcmE (160 aa).

The Cytoplasmic portion of the chain corresponds to 1–7; the sequence is MTRKQRR. A helical; Signal-anchor for type II membrane protein membrane pass occupies residues 8-28; it reads ATFIAVSLGILALAVGLVLYA. At 29-160 the chain is on the periplasmic side; the sequence is MRDSIVYFYS…SETYGQGSYP (132 aa). Residues H122 and Y126 each contribute to the heme site. Residues 141 to 160 form a disordered region; the sequence is WQGEGAEAPHSETYGQGSYP.

This sequence belongs to the CcmE/CycJ family.

The protein localises to the cell inner membrane. Its function is as follows. Heme chaperone required for the biogenesis of c-type cytochromes. Transiently binds heme delivered by CcmC and transfers the heme to apo-cytochromes in a process facilitated by CcmF and CcmH. The protein is Cytochrome c-type biogenesis protein CcmE of Parvibaculum lavamentivorans (strain DS-1 / DSM 13023 / NCIMB 13966).